A 38-amino-acid chain; its full sequence is Photosystem II reaction center protein X (38 aa).

The chain crosses the membrane as a helical span at residues 9–29 (ISSLTAGGLVVLTIAVALIVI).

It belongs to the PsbX family. Type 1 subfamily. As to quaternary structure, PSII is composed of 1 copy each of membrane proteins PsbA, PsbB, PsbC, PsbD, PsbE, PsbF, PsbH, PsbI, PsbJ, PsbK, PsbL, PsbM, PsbT, PsbX, PsbY, PsbZ, Psb30/Ycf12, at least 3 peripheral proteins of the oxygen-evolving complex and a large number of cofactors. It forms dimeric complexes.

It localises to the plastid. The protein resides in the chloroplast thylakoid membrane. In terms of biological role, involved in the binding and/or turnover of quinones at the Q(B) site of photosystem II (PSII). PSII is a light-driven water plastoquinone oxidoreductase, using light energy to abstract electrons from H(2)O, generating a proton gradient subsequently used for ATP formation. This chain is Photosystem II reaction center protein X, found in Trieres chinensis (Marine centric diatom).